Consider the following 391-residue polypeptide: Formate-dependent phosphoribosylglycinamide formyltransferase (391 aa).

Residues 20 to 21 and E80 contribute to the N(1)-(5-phospho-beta-D-ribosyl)glycinamide site; that span reads EL. ATP is bound by residues R112, K153, 158–163, 193–196, and E201; these read SSGKGQ and EGFI. One can recognise an ATP-grasp domain in the interval 117–306; the sequence is RLAAEELDLS…EFALHVRAFT (190 aa). Residues E265 and E277 each coordinate Mg(2+). N(1)-(5-phospho-beta-D-ribosyl)glycinamide-binding positions include D284, K354, and 361 to 362; that span reads RR.

This sequence belongs to the PurK/PurT family. Homodimer.

The catalysed reaction is N(1)-(5-phospho-beta-D-ribosyl)glycinamide + formate + ATP = N(2)-formyl-N(1)-(5-phospho-beta-D-ribosyl)glycinamide + ADP + phosphate + H(+). It functions in the pathway purine metabolism; IMP biosynthesis via de novo pathway; N(2)-formyl-N(1)-(5-phospho-D-ribosyl)glycinamide from N(1)-(5-phospho-D-ribosyl)glycinamide (formate route): step 1/1. In terms of biological role, involved in the de novo purine biosynthesis. Catalyzes the transfer of formate to 5-phospho-ribosyl-glycinamide (GAR), producing 5-phospho-ribosyl-N-formylglycinamide (FGAR). Formate is provided by PurU via hydrolysis of 10-formyl-tetrahydrofolate. In Vibrio parahaemolyticus serotype O3:K6 (strain RIMD 2210633), this protein is Formate-dependent phosphoribosylglycinamide formyltransferase.